A 346-amino-acid chain; its full sequence is MVSEAPPFWWTKADWRAYALWPFAWAYGRVAAIRMDRARRAMPPVPLICVGNFTVGGAGKTPTAIALAQAAKARGLKPGFLSRGYGGSLDVTTVVDPGHHRARDVGDEPLLLAREALTVVCRRRVDGARRLAAEGADIIIMDDGFQSARLTFDFALLVIDSMRGIGNGHLVPSGPVRAPIADQLRHATALLKIGHGPAADRLIRRAARAGKAIYVADTVRLDDGSMSGVKVLAWAGIADPEKFYRTVRDAGAIVEETRSFPDHHHFSDDEIADLIDRAASQGYTLVTTAKDMVRLEPGHGRAAELAAKSRVIEIEVRFDDPLAPAKIIDATLAAARARKLRANGKG.

Residue 54-61 (TVGGAGKT) participates in ATP binding.

It belongs to the LpxK family.

The catalysed reaction is a lipid A disaccharide + ATP = a lipid IVA + ADP + H(+). Its pathway is glycolipid biosynthesis; lipid IV(A) biosynthesis; lipid IV(A) from (3R)-3-hydroxytetradecanoyl-[acyl-carrier-protein] and UDP-N-acetyl-alpha-D-glucosamine: step 6/6. Transfers the gamma-phosphate of ATP to the 4'-position of a tetraacyldisaccharide 1-phosphate intermediate (termed DS-1-P) to form tetraacyldisaccharide 1,4'-bis-phosphate (lipid IVA). The protein is Tetraacyldisaccharide 4'-kinase of Sinorhizobium fredii (strain NBRC 101917 / NGR234).